The following is a 328-amino-acid chain: Peroxidase 59 (328 aa).

The signal sequence occupies residues 1 to 28 (MKTQTKVMGGHVLLTVFTLCMLCSGVRA). Pyrrolidone carboxylic acid is present on Gln29. Cystine bridges form between Cys39–Cys116, Cys72–Cys77, Cys122–Cys323, and Cys200–Cys232. Residue His70 is the Proton acceptor of the active site. Ca(2+)-binding residues include Asp71, Val74, Gly76, Asp78, and Ser80. Pro163 contributes to the substrate binding site. Asn182 carries an N-linked (GlcNAc...) asparagine glycan. Heme b is bound at residue His193. Thr194 lines the Ca(2+) pocket. Asn209 and Asn239 each carry an N-linked (GlcNAc...) asparagine glycan. Ca(2+) is bound by residues Asp245, Thr248, Thr251, and Asp253. Asn281 and Asn310 each carry an N-linked (GlcNAc...) asparagine glycan.

The protein belongs to the peroxidase family. Classical plant (class III) peroxidase subfamily. Heme b is required as a cofactor. It depends on Ca(2+) as a cofactor. As to expression, slightly expressed in roots.

The protein localises to the secreted. The catalysed reaction is 2 a phenolic donor + H2O2 = 2 a phenolic radical donor + 2 H2O. In terms of biological role, removal of H(2)O(2), oxidation of toxic reductants, biosynthesis and degradation of lignin, suberization, auxin catabolism, response to environmental stresses such as wounding, pathogen attack and oxidative stress. These functions might be dependent on each isozyme/isoform in each plant tissue. This Arabidopsis thaliana (Mouse-ear cress) protein is Peroxidase 59 (PER59).